We begin with the raw amino-acid sequence, 99 residues long: Small ribosomal subunit protein uS19 (99 aa).

It belongs to the universal ribosomal protein uS19 family.

In terms of biological role, protein S19 forms a complex with S13 that binds strongly to the 16S ribosomal RNA. In Sulfurihydrogenibium sp. (strain YO3AOP1), this protein is Small ribosomal subunit protein uS19.